Reading from the N-terminus, the 538-residue chain is Nucleolar protein 12 (538 aa).

Disordered regions lie at residues 1 to 25 (MGKK…LPFL), 41 to 203 (KSAG…KSNR), 336 to 378 (ETDP…ASTR), 433 to 455 (AKKL…LGEG), and 476 to 538 (KAEG…KMAK). The segment covering 63-92 (PEDDVEKEEDDEEISELEEDLQSEDEDMQD) has biased composition (acidic residues). A coiled-coil region spans residues 64–156 (EDDVEKEEDD…KAKRQKVEEG (93 aa)). 3 stretches are compositionally biased toward basic and acidic residues: residues 127–144 (TYMR…EKRR), 151–173 (QKVE…GRDE), and 182–202 (TVPR…EKSN). RRM domains lie at 203-315 (RTVF…SVAH) and 323-435 (RCVF…RAKK). Basic residues predominate over residues 502-521 (IKIKTKSRGSKGKPKNRSAK).

This sequence belongs to the RRM RBM34 family.

The protein localises to the nucleus. Its subcellular location is the nucleolus. Involved in pre-25S rRNA processing. This is Nucleolar protein 12 (nop12) from Aspergillus fumigatus (strain ATCC MYA-4609 / CBS 101355 / FGSC A1100 / Af293) (Neosartorya fumigata).